The chain runs to 306 residues: tRNA pseudouridine synthase B (306 aa).

Asp47 functions as the Nucleophile in the catalytic mechanism.

This sequence belongs to the pseudouridine synthase TruB family. Type 1 subfamily.

It carries out the reaction uridine(55) in tRNA = pseudouridine(55) in tRNA. Functionally, responsible for synthesis of pseudouridine from uracil-55 in the psi GC loop of transfer RNAs. The polypeptide is tRNA pseudouridine synthase B (Neisseria gonorrhoeae (strain NCCP11945)).